The primary structure comprises 76 residues: Exodeoxyribonuclease 7 small subunit (76 aa).

This sequence belongs to the XseB family. As to quaternary structure, heterooligomer composed of large and small subunits.

It localises to the cytoplasm. The enzyme catalyses Exonucleolytic cleavage in either 5'- to 3'- or 3'- to 5'-direction to yield nucleoside 5'-phosphates.. Functionally, bidirectionally degrades single-stranded DNA into large acid-insoluble oligonucleotides, which are then degraded further into small acid-soluble oligonucleotides. This Bacillus cereus (strain G9842) protein is Exodeoxyribonuclease 7 small subunit.